The sequence spans 197 residues: MQIVLASQSPSRRKILNSAGVEPLIHPADVDEDALLHSLNGSAPEEIVRQLALAKAQVVAPSYPGDVVIGGDSMLLIDATLQGKPHTREATIERWKQQRGNKATLITGHAIIFGDEVIVESSSTNIHFAEASDVDIERYADSGEPLECAGAFTLEALGGWFIDSIEGDPSSVIGLSLPVVRRALYRLGFNASDFWNM.

The active-site Proton acceptor is the D72.

It belongs to the Maf family. A divalent metal cation serves as cofactor.

The protein resides in the cytoplasm. The enzyme catalyses a ribonucleoside 5'-triphosphate + H2O = a ribonucleoside 5'-phosphate + diphosphate + H(+). It carries out the reaction a 2'-deoxyribonucleoside 5'-triphosphate + H2O = a 2'-deoxyribonucleoside 5'-phosphate + diphosphate + H(+). Nucleoside triphosphate pyrophosphatase. May have a dual role in cell division arrest and in preventing the incorporation of modified nucleotides into cellular nucleic acids. This Corynebacterium glutamicum (strain R) protein is Nucleoside triphosphate pyrophosphatase.